The sequence spans 290 residues: Undecaprenyl-diphosphatase 2 (290 aa).

6 helical membrane-spanning segments follow: residues 104–124 (WMVI…KDLI), 128–148 (LRNL…FILA), 174–194 (CLAL…GLFL), 205–225 (SFLL…PDAF), 237–257 (QLFV…AWLL), and 268–288 (FALW…FGVL).

Belongs to the UppP family.

Its subcellular location is the cell membrane. The catalysed reaction is di-trans,octa-cis-undecaprenyl diphosphate + H2O = di-trans,octa-cis-undecaprenyl phosphate + phosphate + H(+). Catalyzes the dephosphorylation of undecaprenyl diphosphate (UPP). Confers resistance to bacitracin. This is Undecaprenyl-diphosphatase 2 from Corynebacterium jeikeium (strain K411).